The chain runs to 85 residues: Cell division protein ZapA (85 aa).

Residues 59 to 85 (TAVNVVHDYMKLQEKYEILERQLKEKE) are a coiled coil.

It belongs to the ZapA family. Type 2 subfamily. Homodimer. Interacts with FtsZ.

It is found in the cytoplasm. Its function is as follows. Activator of cell division through the inhibition of FtsZ GTPase activity, therefore promoting FtsZ assembly into bundles of protofilaments necessary for the formation of the division Z ring. It is recruited early at mid-cell but it is not essential for cell division. In Bacillus velezensis (strain DSM 23117 / BGSC 10A6 / LMG 26770 / FZB42) (Bacillus amyloliquefaciens subsp. plantarum), this protein is Cell division protein ZapA.